Consider the following 101-residue polypeptide: Urease subunit beta (101 aa).

Belongs to the urease beta subunit family. In terms of assembly, heterotrimer of UreA (gamma), UreB (beta) and UreC (alpha) subunits. Three heterotrimers associate to form the active enzyme.

It is found in the cytoplasm. It carries out the reaction urea + 2 H2O + H(+) = hydrogencarbonate + 2 NH4(+). The protein operates within nitrogen metabolism; urea degradation; CO(2) and NH(3) from urea (urease route): step 1/1. In Cupriavidus pinatubonensis (strain JMP 134 / LMG 1197) (Cupriavidus necator (strain JMP 134)), this protein is Urease subunit beta.